The primary structure comprises 183 residues: Large ribosomal subunit protein uL5 (183 aa).

It belongs to the universal ribosomal protein uL5 family. As to quaternary structure, part of the 50S ribosomal subunit; part of the 5S rRNA/L5/L18/L25 subcomplex. Contacts the 5S rRNA and the P site tRNA. Forms a bridge to the 30S subunit in the 70S ribosome.

Functionally, this is one of the proteins that bind and probably mediate the attachment of the 5S RNA into the large ribosomal subunit, where it forms part of the central protuberance. In the 70S ribosome it contacts protein S13 of the 30S subunit (bridge B1b), connecting the 2 subunits; this bridge is implicated in subunit movement. Contacts the P site tRNA; the 5S rRNA and some of its associated proteins might help stabilize positioning of ribosome-bound tRNAs. This is Large ribosomal subunit protein uL5 from Legionella pneumophila (strain Lens).